Consider the following 278-residue polypeptide: Diaminopimelate epimerase (278 aa).

Residues Asn13, Gln46, and Asn67 each contribute to the substrate site. Residue Cys76 is the Proton donor of the active site. Residues Gly77–Asn78, Asn160, Asn193, and Glu211–Arg212 each bind substrate. Residue Cys220 is the Proton acceptor of the active site. Residue Gly221–Thr222 participates in substrate binding.

The protein belongs to the diaminopimelate epimerase family. In terms of assembly, homodimer.

It localises to the cytoplasm. It catalyses the reaction (2S,6S)-2,6-diaminopimelate = meso-2,6-diaminopimelate. It participates in amino-acid biosynthesis; L-lysine biosynthesis via DAP pathway; DL-2,6-diaminopimelate from LL-2,6-diaminopimelate: step 1/1. Its function is as follows. Catalyzes the stereoinversion of LL-2,6-diaminopimelate (L,L-DAP) to meso-diaminopimelate (meso-DAP), a precursor of L-lysine and an essential component of the bacterial peptidoglycan. This chain is Diaminopimelate epimerase, found in Thioalkalivibrio sulfidiphilus (strain HL-EbGR7).